The chain runs to 439 residues: Ribosomal protein uS12 methylthiotransferase RimO (439 aa).

Positions 3–113 (HKVGFVSLGC…VVNAVHQHLP (111 aa)) constitute an MTTase N-terminal domain. [4Fe-4S] cluster contacts are provided by Cys-12, Cys-48, Cys-77, Cys-144, Cys-148, and Cys-151. The 238-residue stretch at 130-367 (LTPRHYAYLK…MQVQAEISRN (238 aa)) folds into the Radical SAM core domain. In terms of domain architecture, TRAM spans 370-436 (KNKIGSTQTV…DYDLYGDLEY (67 aa)).

This sequence belongs to the methylthiotransferase family. RimO subfamily. The cofactor is [4Fe-4S] cluster.

The protein localises to the cytoplasm. It catalyses the reaction L-aspartate(89)-[ribosomal protein uS12]-hydrogen + (sulfur carrier)-SH + AH2 + 2 S-adenosyl-L-methionine = 3-methylsulfanyl-L-aspartate(89)-[ribosomal protein uS12]-hydrogen + (sulfur carrier)-H + 5'-deoxyadenosine + L-methionine + A + S-adenosyl-L-homocysteine + 2 H(+). Its function is as follows. Catalyzes the methylthiolation of an aspartic acid residue of ribosomal protein uS12. This Legionella pneumophila (strain Corby) protein is Ribosomal protein uS12 methylthiotransferase RimO.